Reading from the N-terminus, the 374-residue chain is DNA replication and repair protein RecF (374 aa).

30–37 (GNNAQGKS) is a binding site for ATP.

This sequence belongs to the RecF family.

It localises to the cytoplasm. Functionally, the RecF protein is involved in DNA metabolism; it is required for DNA replication and normal SOS inducibility. RecF binds preferentially to single-stranded, linear DNA. It also seems to bind ATP. This chain is DNA replication and repair protein RecF, found in Nostoc punctiforme (strain ATCC 29133 / PCC 73102).